The primary structure comprises 848 residues: Leucine--tRNA ligase (848 aa).

The segment at 1–21 (MTENTPGTSAPERFDPATADT) is disordered. A 'HIGH' region motif is present at residues 51-61 (PYPSGRIHIGH). The short motif at 625-629 (KMSKS) is the 'KMSKS' region element. Lysine 628 contributes to the ATP binding site.

It belongs to the class-I aminoacyl-tRNA synthetase family.

The protein resides in the cytoplasm. It catalyses the reaction tRNA(Leu) + L-leucine + ATP = L-leucyl-tRNA(Leu) + AMP + diphosphate. The sequence is that of Leucine--tRNA ligase from Novosphingobium aromaticivorans (strain ATCC 700278 / DSM 12444 / CCUG 56034 / CIP 105152 / NBRC 16084 / F199).